A 193-amino-acid chain; its full sequence is Probable nicotinate-nucleotide adenylyltransferase (193 aa).

Belongs to the NadD family.

The enzyme catalyses nicotinate beta-D-ribonucleotide + ATP + H(+) = deamido-NAD(+) + diphosphate. Its pathway is cofactor biosynthesis; NAD(+) biosynthesis; deamido-NAD(+) from nicotinate D-ribonucleotide: step 1/1. Its function is as follows. Catalyzes the reversible adenylation of nicotinate mononucleotide (NaMN) to nicotinic acid adenine dinucleotide (NaAD). The chain is Probable nicotinate-nucleotide adenylyltransferase from Flavobacterium psychrophilum (strain ATCC 49511 / DSM 21280 / CIP 103535 / JIP02/86).